Consider the following 144-residue polypeptide: D-aminoacyl-tRNA deacylase (144 aa).

The Gly-cisPro motif, important for rejection of L-amino acids signature appears at 136-137 (GP).

It belongs to the DTD family. Homodimer.

The protein localises to the cytoplasm. The enzyme catalyses glycyl-tRNA(Ala) + H2O = tRNA(Ala) + glycine + H(+). It carries out the reaction a D-aminoacyl-tRNA + H2O = a tRNA + a D-alpha-amino acid + H(+). Its function is as follows. An aminoacyl-tRNA editing enzyme that deacylates mischarged D-aminoacyl-tRNAs. Also deacylates mischarged glycyl-tRNA(Ala), protecting cells against glycine mischarging by AlaRS. Acts via tRNA-based rather than protein-based catalysis; rejects L-amino acids rather than detecting D-amino acids in the active site. By recycling D-aminoacyl-tRNA to D-amino acids and free tRNA molecules, this enzyme counteracts the toxicity associated with the formation of D-aminoacyl-tRNA entities in vivo and helps enforce protein L-homochirality. This Aliivibrio fischeri (strain MJ11) (Vibrio fischeri) protein is D-aminoacyl-tRNA deacylase.